A 96-amino-acid chain; its full sequence is UPF0102 protein ML1607 (96 aa).

It belongs to the UPF0102 family.

This Mycobacterium leprae (strain TN) protein is UPF0102 protein ML1607.